The following is a 280-amino-acid chain: UDP-3-O-acyl-N-acetylglucosamine deacetylase (280 aa).

3 residues coordinate Zn(2+): His77, His238, and Asp242. His265 serves as the catalytic Proton donor.

Belongs to the LpxC family. Zn(2+) serves as cofactor.

It catalyses the reaction a UDP-3-O-[(3R)-3-hydroxyacyl]-N-acetyl-alpha-D-glucosamine + H2O = a UDP-3-O-[(3R)-3-hydroxyacyl]-alpha-D-glucosamine + acetate. It participates in glycolipid biosynthesis; lipid IV(A) biosynthesis; lipid IV(A) from (3R)-3-hydroxytetradecanoyl-[acyl-carrier-protein] and UDP-N-acetyl-alpha-D-glucosamine: step 2/6. Functionally, catalyzes the hydrolysis of UDP-3-O-myristoyl-N-acetylglucosamine to form UDP-3-O-myristoylglucosamine and acetate, the committed step in lipid A biosynthesis. The protein is UDP-3-O-acyl-N-acetylglucosamine deacetylase of Nostoc sp. (strain PCC 7120 / SAG 25.82 / UTEX 2576).